A 1076-amino-acid chain; its full sequence is DNA-directed RNA polymerase subunit beta (1076 aa).

Belongs to the RNA polymerase beta chain family. As to quaternary structure, in plastids the minimal PEP RNA polymerase catalytic core is composed of four subunits: alpha, beta, beta', and beta''. When a (nuclear-encoded) sigma factor is associated with the core the holoenzyme is formed, which can initiate transcription.

It localises to the plastid. The protein resides in the chloroplast. The enzyme catalyses RNA(n) + a ribonucleoside 5'-triphosphate = RNA(n+1) + diphosphate. Its function is as follows. DNA-dependent RNA polymerase catalyzes the transcription of DNA into RNA using the four ribonucleoside triphosphates as substrates. This Hordeum vulgare (Barley) protein is DNA-directed RNA polymerase subunit beta.